The following is a 685-amino-acid chain: Probable inactive leucine-rich repeat receptor-like protein kinase At1g66830 (685 aa).

A signal peptide spans 1-21; the sequence is MSQLFLILCFILTHFFAIATS. The Extracellular segment spans residues 22–305; that stretch reads LNDQGLALLS…RRANHHSRLC (284 aa). N-linked (GlcNAc...) asparagine glycosylation is found at asparagine 38 and asparagine 48. 8 LRR repeats span residues 65–89, 90–113, 115–136, 137–161, 162–185, 186–210, 212–234, and 235–260; these read DMRV…IGSL, LSLR…LFGL, GLQS…EIGS, LKSL…LIPC, KKLK…LGSN, LVHL…VGSL, NLKG…SLGN, and LPEL…VLLN. Residue asparagine 151 is glycosylated (N-linked (GlcNAc...) asparagine). Asparagine 193 carries an N-linked (GlcNAc...) asparagine glycan. An N-linked (GlcNAc...) asparagine glycan is attached at asparagine 247. A helical transmembrane segment spans residues 306-326; sequence IILTATGGTVAGIIFLASLFI. At 327 to 685 the chain is on the cytoplasmic side; that stretch reads YYLRKASARA…ESFEKLVTSI (359 aa). The Protein kinase domain maps to 397–682; that stretch reads KASAFLLGKS…SVLESFEKLV (286 aa). 3 positions are modified to phosphoserine: serine 399, serine 480, and serine 590.

The protein belongs to the protein kinase superfamily. Ser/Thr protein kinase family.

The protein resides in the cell membrane. The sequence is that of Probable inactive leucine-rich repeat receptor-like protein kinase At1g66830 from Arabidopsis thaliana (Mouse-ear cress).